Reading from the N-terminus, the 366-residue chain is Ribosomal RNA large subunit methyltransferase M (366 aa).

S-adenosyl-L-methionine contacts are provided by residues serine 188, 221–224 (CPGG), aspartate 240, aspartate 260, and aspartate 277. The active-site Proton acceptor is the lysine 306.

This sequence belongs to the class I-like SAM-binding methyltransferase superfamily. RNA methyltransferase RlmE family. RlmM subfamily. As to quaternary structure, monomer.

It localises to the cytoplasm. It carries out the reaction cytidine(2498) in 23S rRNA + S-adenosyl-L-methionine = 2'-O-methylcytidine(2498) in 23S rRNA + S-adenosyl-L-homocysteine + H(+). Functionally, catalyzes the 2'-O-methylation at nucleotide C2498 in 23S rRNA. This is Ribosomal RNA large subunit methyltransferase M from Salmonella gallinarum (strain 287/91 / NCTC 13346).